A 1342-amino-acid polypeptide reads, in one-letter code: DNA-directed RNA polymerase subunit beta (1342 aa).

It belongs to the RNA polymerase beta chain family. In terms of assembly, the RNAP catalytic core consists of 2 alpha, 1 beta, 1 beta' and 1 omega subunit. When a sigma factor is associated with the core the holoenzyme is formed, which can initiate transcription.

The catalysed reaction is RNA(n) + a ribonucleoside 5'-triphosphate = RNA(n+1) + diphosphate. In terms of biological role, DNA-dependent RNA polymerase catalyzes the transcription of DNA into RNA using the four ribonucleoside triphosphates as substrates. The protein is DNA-directed RNA polymerase subunit beta of Mannheimia succiniciproducens (strain KCTC 0769BP / MBEL55E).